Consider the following 84-residue polypeptide: Dolichol phosphate-mannose biosynthesis regulatory protein (84 aa).

2 helical membrane-spanning segments follow: residues 11-31 (LGLVALSLIIFTYYTAWVILL) and 49-69 (YAIAIPLAAGHLLLLFVGIFI).

Belongs to the DPM2 family. In terms of assembly, component of the dolichol-phosphate mannose (DPM) synthase complex composed of DPM1, DPM2 and DPM3; in the complex interacts directly with DPM3. Component of the glycosylphosphatidylinositol-N-acetylglucosaminyltransferase (GPI-GnT) complex composed at least by PIGA, PIGC, PIGH, PIGP, PIGQ, PIGY and DPM2. Interacts with PIGA, PIGC and PIGQ.

Its subcellular location is the endoplasmic reticulum membrane. Its pathway is protein modification; protein glycosylation. Regulates the biosynthesis of dolichol phosphate-mannose. Regulatory subunit of the dolichol-phosphate mannose (DPM) synthase complex; essential for the ER localization and stable expression of DPM1. Part of the glycosylphosphatidylinositol-N-acetylglucosaminyltransferase (GPI-GnT) complex that catalyzes the transfer of N-acetylglucosamine from UDP-N-acetylglucosamine to phosphatidylinositol and participates in the first step of GPI biosynthesis. May act by regulating the GPI-GNT complex. In Bos taurus (Bovine), this protein is Dolichol phosphate-mannose biosynthesis regulatory protein.